Here is a 123-residue protein sequence, read N- to C-terminus: Glucose starvation-inducible protein B (123 aa).

Basic and acidic residues-rich tracts occupy residues 1–29 (MADN…KEFY) and 41–109 (SKNH…KEFY). Positions 1–123 (MADNNKMSRE…SKGGNARNND (123 aa)) are disordered. Tandem repeats lie at residues 13–32 (GRKG…YQEI), 33–52 (GQKG…YQEI), 53–72 (GEKG…YQEI), 73–92 (GEKG…YQEI), and 93–112 (GRKG…YQEI). A 5 X 20 AA approximate tandem repeats region spans residues 13 to 120 (GRKGGETTSK…EIGSKGGNAR (108 aa)).

In terms of biological role, involved in an adaptive response to nutrient deprivation other than sporulation. The sequence is that of Glucose starvation-inducible protein B (gsiB) from Bacillus subtilis (strain 168).